The primary structure comprises 647 residues: Glutamyl-tRNA(Gln) amidotransferase subunit B, mitochondrial (647 aa).

Residues 1-16 constitute a mitochondrion transit peptide; the sequence is MARNLCRNVQTTPRPL. Positions 39-77 are disordered; that stretch reads PRPRYFGSSTAKSAKKKSNNKAYSGSSMSAGDASAGPSR. The segment covering 58–76 has biased composition (low complexity); it reads NKAYSGSSMSAGDASAGPS.

The protein belongs to the GatB/GatE family. GatB subfamily. In terms of assembly, subunit of the heterotrimeric GatCAB amidotransferase (AdT) complex, composed of A, B and C subunits.

It is found in the mitochondrion. It catalyses the reaction L-glutamyl-tRNA(Gln) + L-glutamine + ATP + H2O = L-glutaminyl-tRNA(Gln) + L-glutamate + ADP + phosphate + H(+). Allows the formation of correctly charged Gln-tRNA(Gln) through the transamidation of misacylated Glu-tRNA(Gln) in the mitochondria. The reaction takes place in the presence of glutamine and ATP through an activated gamma-phospho-Glu-tRNA(Gln). This chain is Glutamyl-tRNA(Gln) amidotransferase subunit B, mitochondrial, found in Mycosarcoma maydis (Corn smut fungus).